We begin with the raw amino-acid sequence, 255 residues long: 4-hydroxy-tetrahydrodipicolinate reductase (255 aa).

Residues Gly9 to Met14, Gly89 to Thr91, and Ala115 to Phe118 contribute to the NAD(+) site. His145 (proton donor/acceptor) is an active-site residue. Position 146 (His146) interacts with (S)-2,3,4,5-tetrahydrodipicolinate. Residue Lys149 is the Proton donor of the active site. Gly155–Thr156 is a (S)-2,3,4,5-tetrahydrodipicolinate binding site.

It belongs to the DapB family.

It localises to the cytoplasm. It catalyses the reaction (S)-2,3,4,5-tetrahydrodipicolinate + NAD(+) + H2O = (2S,4S)-4-hydroxy-2,3,4,5-tetrahydrodipicolinate + NADH + H(+). The enzyme catalyses (S)-2,3,4,5-tetrahydrodipicolinate + NADP(+) + H2O = (2S,4S)-4-hydroxy-2,3,4,5-tetrahydrodipicolinate + NADPH + H(+). Its pathway is amino-acid biosynthesis; L-lysine biosynthesis via DAP pathway; (S)-tetrahydrodipicolinate from L-aspartate: step 4/4. Catalyzes the conversion of 4-hydroxy-tetrahydrodipicolinate (HTPA) to tetrahydrodipicolinate. The chain is 4-hydroxy-tetrahydrodipicolinate reductase from Streptococcus mutans serotype c (strain ATCC 700610 / UA159).